The chain runs to 348 residues: MLICHQCLSSRLTYISNLGLNIAYRLIEQFTDDSKLVIVVTSRTLPRVREVVDLIKTYAEKCGKSGAVDFDYLLVDFTDMVSVLGAAYELEKRYDAIHYFYANAAQGVYSGIDWLGATKAVLRDPLDAVTNPTYKIQRVGVKSRDGLGLVFQANVFGPYYLIRRIIPLLAKGKAKVVWLSSLMSDVKYLSLEDVELLRTDSSYEGSKRLVDLLHLATYKELKSLGIHQYVTHPGIFTSHSFYQYLNFFTYYGMLFLFYLARWLGSPWHNIQGYKGANAPIYVATLANPTFEHQALKYGSATYRDGMEYIAKHEIDPTGMHDAYKYIRDLAEEWDIKLKDQITIGRSLS.

5 residues coordinate NADP(+): Leu-18, Val-37, Thr-41, Arg-47, and Arg-163. Residues Ser-180 and Tyr-203 each act as proton donor in the active site. Residues Tyr-203, Lys-207, and Ser-238 each coordinate NADP(+). Residue Lys-207 is the Lowers pKa of active site Tyr of the active site.

The protein belongs to the short-chain dehydrogenases/reductases (SDR) family. ERG27 subfamily.

It catalyses the reaction a 3beta-hydroxysteroid + NADP(+) = a 3-oxosteroid + NADPH + H(+). It functions in the pathway steroid biosynthesis; zymosterol biosynthesis; zymosterol from lanosterol: step 5/6. Responsible for the reduction of the keto group on the C-3 of sterols. This Eremothecium gossypii (strain ATCC 10895 / CBS 109.51 / FGSC 9923 / NRRL Y-1056) (Yeast) protein is 3-keto-steroid reductase (ERG27).